We begin with the raw amino-acid sequence, 276 residues long: UDP-3-O-acyl-N-acetylglucosamine deacetylase (276 aa).

Zn(2+) contacts are provided by histidine 76, histidine 234, and aspartate 238. The active-site Proton donor is histidine 261.

It belongs to the LpxC family. Zn(2+) is required as a cofactor.

It catalyses the reaction a UDP-3-O-[(3R)-3-hydroxyacyl]-N-acetyl-alpha-D-glucosamine + H2O = a UDP-3-O-[(3R)-3-hydroxyacyl]-alpha-D-glucosamine + acetate. It participates in glycolipid biosynthesis; lipid IV(A) biosynthesis; lipid IV(A) from (3R)-3-hydroxytetradecanoyl-[acyl-carrier-protein] and UDP-N-acetyl-alpha-D-glucosamine: step 2/6. Its function is as follows. Catalyzes the hydrolysis of UDP-3-O-myristoyl-N-acetylglucosamine to form UDP-3-O-myristoylglucosamine and acetate, the committed step in lipid A biosynthesis. The chain is UDP-3-O-acyl-N-acetylglucosamine deacetylase from Synechocystis sp. (strain ATCC 27184 / PCC 6803 / Kazusa).